Reading from the N-terminus, the 246-residue chain is Pyridoxine 5'-phosphate synthase (246 aa).

Asparagine 12 serves as a coordination point for 3-amino-2-oxopropyl phosphate. 14–15 (DH) is a binding site for 1-deoxy-D-xylulose 5-phosphate. 3-amino-2-oxopropyl phosphate is bound at residue arginine 23. The Proton acceptor role is filled by histidine 48. 1-deoxy-D-xylulose 5-phosphate contacts are provided by arginine 50 and histidine 55. Glutamate 75 (proton acceptor) is an active-site residue. Residue threonine 105 participates in 1-deoxy-D-xylulose 5-phosphate binding. Catalysis depends on histidine 196, which acts as the Proton donor. 3-amino-2-oxopropyl phosphate contacts are provided by residues glycine 197 and 218–219 (GH).

It belongs to the PNP synthase family. As to quaternary structure, homooctamer; tetramer of dimers.

The protein resides in the cytoplasm. It catalyses the reaction 3-amino-2-oxopropyl phosphate + 1-deoxy-D-xylulose 5-phosphate = pyridoxine 5'-phosphate + phosphate + 2 H2O + H(+). It functions in the pathway cofactor biosynthesis; pyridoxine 5'-phosphate biosynthesis; pyridoxine 5'-phosphate from D-erythrose 4-phosphate: step 5/5. Its function is as follows. Catalyzes the complicated ring closure reaction between the two acyclic compounds 1-deoxy-D-xylulose-5-phosphate (DXP) and 3-amino-2-oxopropyl phosphate (1-amino-acetone-3-phosphate or AAP) to form pyridoxine 5'-phosphate (PNP) and inorganic phosphate. The sequence is that of Pyridoxine 5'-phosphate synthase from Pseudomonas savastanoi pv. phaseolicola (strain 1448A / Race 6) (Pseudomonas syringae pv. phaseolicola (strain 1448A / Race 6)).